The sequence spans 1141 residues: DNA-directed RNA polymerase subunit beta (1141 aa).

Acidic residues-rich tracts occupy residues 1063 to 1074 and 1096 to 1141; these read EIEIKEDDDDVS and GGNE…GDEE. The interval 1063–1141 is disordered; that stretch reads EIEIKEDDDD…VPDEAYGDEE (79 aa).

It belongs to the RNA polymerase beta chain family. The RNAP catalytic core consists of 2 alpha, 1 beta, 1 beta' and 1 omega subunit. When a sigma factor is associated with the core the holoenzyme is formed, which can initiate transcription.

The enzyme catalyses RNA(n) + a ribonucleoside 5'-triphosphate = RNA(n+1) + diphosphate. In terms of biological role, DNA-dependent RNA polymerase catalyzes the transcription of DNA into RNA using the four ribonucleoside triphosphates as substrates. This chain is DNA-directed RNA polymerase subunit beta, found in Moorella thermoacetica (strain ATCC 39073 / JCM 9320).